We begin with the raw amino-acid sequence, 290 residues long: Enoyl-CoA hydratase, mitochondrial (290 aa).

The N-terminal 27 residues, 1 to 27, are a transit peptide targeting the mitochondrion; it reads MAALRVLLSCVRGPLRPPVRCPAWRPF. The residue at position 46 (Thr46) is a Phosphothreonine. Position 98–101 (98–101) interacts with substrate; sequence ADIK. Lys101 carries the post-translational modification N6-acetyllysine; alternate. Lys101 carries the N6-succinyllysine; alternate modification. Ser114 carries the post-translational modification Phosphoserine. Lys115 is subject to N6-acetyllysine; alternate. Lys115 carries the N6-succinyllysine; alternate modification. An N6-acetyllysine modification is found at Lys118. A substrate-binding site is contributed by Gly141. At Lys204 the chain carries N6-succinyllysine. Lys211 is modified (N6-acetyllysine).

This sequence belongs to the enoyl-CoA hydratase/isomerase family. In terms of assembly, homohexamer; dimer of trimers. As to expression, liver, fibroblast, muscle. Barely detectable in spleen and kidney.

The protein resides in the mitochondrion matrix. The enzyme catalyses a (3S)-3-hydroxyacyl-CoA = a (2E)-enoyl-CoA + H2O. It catalyses the reaction a (3E)-enoyl-CoA = a 4-saturated (2E)-enoyl-CoA. The catalysed reaction is (3E)-hexenoyl-CoA = (2E)-hexenoyl-CoA. It carries out the reaction (3S)-3-hydroxybutanoyl-CoA = (2E)-butenoyl-CoA + H2O. The enzyme catalyses 3-hydroxyisovaleryl-CoA = 3-methylbut-2-enoyl-CoA + H2O. It catalyses the reaction 3-hydroxypropanoyl-CoA = acryloyl-CoA + H2O. The catalysed reaction is 3-hydroxybutanoyl-CoA = (2E)-butenoyl-CoA + H2O. It carries out the reaction 2-methylpropenoyl-CoA + H2O = (S)-3-hydroxyisobutanoyl-CoA. The enzyme catalyses (3S)-hydroxyhexanoyl-CoA = (2E)-hexenoyl-CoA + H2O. It catalyses the reaction (3S)-hydroxydecanoyl-CoA = (2E)-decenoyl-CoA + H2O. Its pathway is lipid metabolism; fatty acid beta-oxidation. Functionally, converts unsaturated trans-2-enoyl-CoA species ((2E)-enoyl-CoA) to the corresponding (3S)-3hydroxyacyl-CoA species through addition of a water molecule to the double bond. Catalyzes the hydration of medium- and short-chained fatty enoyl-CoA thioesters from 4 carbons long (C4) up to C16. Has high substrate specificity for crotonyl-CoA ((2E)-butenoyl-CoA) and moderate specificity for acryloyl-CoA, 3-methylcrotonyl-CoA (3-methyl-(2E)-butenoyl-CoA) and methacrylyl-CoA ((2E)-2-methylpropenoyl-CoA). Can bind tiglyl-CoA (2-methylcrotonoyl-CoA), but hydrates only a small amount of this substrate. Plays a key role in the beta-oxidation spiral of short- and medium-chain fatty acid oxidation. At a lower rate than the hydratase reaction, catalyzes the isomerase reaction of trans-3-enoyl-CoA species (such as (3E)-hexenoyl-CoA) to trans-2-enoyl-CoA species (such as (2E)-hexenoyl-CoA), which are subsequently hydrated to 3(S)-3-hydroxyacyl-CoA species (such as (3S)-hydroxyhexanoyl-CoA). This Homo sapiens (Human) protein is Enoyl-CoA hydratase, mitochondrial.